A 548-amino-acid polypeptide reads, in one-letter code: Synaptic vesicle 2-related protein (548 aa).

Over 1–87 (MEDDLFQLRH…GFGKFQWKLS (87 aa)) the chain is Cytoplasmic. A helical membrane pass occupies residues 88–108 (MLTGLAWMADAMEMMILSILA). The Vesicular portion of the chain corresponds to 109–119 (PQLHCEWRLPS). Residues 120–140 (WQVALLTSVVFIGMMASSSLW) traverse the membrane as a helical segment. Residues 141–156 (GNVSDQYGRRTGLKIS) lie on the Cytoplasmic side of the membrane. A helical membrane pass occupies residues 157-177 (VIWTLYYGILSAFAPVYSWIL). Topologically, residues 178 to 180 (VLR) are vesicular. Residues 181 to 201 (GLVGFGIGGVPQSVTLYAEFL) form a helical membrane-spanning segment. Residues 202–209 (PMKSRAKC) are Cytoplasmic-facing. The helical transmembrane segment at 210–230 (ILLIEIFWALGTVFEVLLAIF) threads the bilayer. The Vesicular portion of the chain corresponds to 231 to 238 (VMPTLGWR). The helical transmembrane segment at 239–259 (WLLILSALPLMLFAILCFWLP) threads the bilayer. Residues 260–316 (ESARYEVLSGNQEKALATLKRIATENGAPMPLGKLIVSRQEDRGKIRDLFSPQFRCT) are Cytoplasmic-facing. The chain crosses the membrane as a helical span at residues 317 to 337 (TLLLWFIWFSNAFSYYGLVLL). Residues 338–373 (TTELFQAGDVCSISNQRKAVKPKCSLACEYLTVEDY) lie on the Vesicular side of the membrane. Residues 374–394 (TDLLWTTLSEFPGLLVTLWII) form a helical membrane-spanning segment. At 395 to 401 (DRVGRKK) the chain is on the cytoplasmic side. The chain crosses the membrane as a helical span at residues 402-422 (TMAICFIIFSFSALLLFLCVG). Residues 423 to 424 (RN) lie on the Vesicular side of the membrane. The helical transmembrane segment at 425-445 (VLTVFLFIARAFISGGFQAAY) threads the bilayer. At 446 to 457 (VYTPEVYPTATR) the chain is on the cytoplasmic side. A helical transmembrane segment spans residues 458–478 (ALGLGTCSGMARVGALITPFI). At 479 to 486 (AQVMLESS) the chain is on the vesicular side. The chain crosses the membrane as a helical span at residues 487-507 (IYLTVLVYSGCCVLAAVASCF). Residues 508–548 (LPIETKGRGLQESSHREWGQEMVGRGTHNVGATPSHSGSQE) are Cytoplasmic-facing. A disordered region spans residues 519–548 (ESSHREWGQEMVGRGTHNVGATPSHSGSQE). Residues 537 to 548 (VGATPSHSGSQE) are compositionally biased toward polar residues.

The protein belongs to the major facilitator superfamily. In terms of tissue distribution, detected in embryonic trigeminal ganglion and spinal cord.

Its subcellular location is the cytoplasmic vesicle. It localises to the secretory vesicle. The protein resides in the synaptic vesicle membrane. This Xenopus laevis (African clawed frog) protein is Synaptic vesicle 2-related protein (svop).